A 190-amino-acid polypeptide reads, in one-letter code: Peptide deformylase (190 aa).

Positions 94 and 136 each coordinate Fe cation. The active site involves Glu137. His140 contacts Fe cation.

Belongs to the polypeptide deformylase family. Fe(2+) serves as cofactor.

It catalyses the reaction N-terminal N-formyl-L-methionyl-[peptide] + H2O = N-terminal L-methionyl-[peptide] + formate. In terms of biological role, removes the formyl group from the N-terminal Met of newly synthesized proteins. Requires at least a dipeptide for an efficient rate of reaction. N-terminal L-methionine is a prerequisite for activity but the enzyme has broad specificity at other positions. The protein is Peptide deformylase of Chlorobium luteolum (strain DSM 273 / BCRC 81028 / 2530) (Pelodictyon luteolum).